We begin with the raw amino-acid sequence, 609 residues long: Mitogen-activated protein kinase kinase kinase 3 (609 aa).

The segment at 1-202 (MPTWWGRKSC…SAVHGSRIGG (202 aa)) is disordered. Over residues 11-28 (KNKDDNHRGIISTDRDIK) the composition is skewed to basic and acidic residues. 2 stretches are compositionally biased toward low complexity: residues 40–64 (PTRG…GFDS) and 90–108 (VSGS…SSGS). The 257-residue stretch at 214–470 (WKKGKFLGSG…ASQLLEHPFL (257 aa)) folds into the Protein kinase domain. ATP-binding positions include 220–228 (LGSGTFGQV) and lysine 243. The active-site Proton acceptor is the aspartate 339. Disordered regions lie at residues 487–511 (PRSY…SHDN) and 590–609 (MEPS…SRLV). Residues 594 to 609 (SFRTQTPNSPLRSRLV) are compositionally biased toward polar residues.

Belongs to the protein kinase superfamily. STE Ser/Thr protein kinase family. MAP kinase kinase kinase subfamily. In terms of assembly, interacts with PBL27. As to expression, expressed in flower buds, roots, leaves, seedlings, stems and immature siliques. Absent of mature pollen.

The enzyme catalyses L-seryl-[protein] + ATP = O-phospho-L-seryl-[protein] + ADP + H(+). It catalyses the reaction L-threonyl-[protein] + ATP = O-phospho-L-threonyl-[protein] + ADP + H(+). The sequence is that of Mitogen-activated protein kinase kinase kinase 3 from Arabidopsis thaliana (Mouse-ear cress).